The following is a 201-amino-acid chain: Recombination protein RecR (201 aa).

Residues 60 to 75 form a C4-type zinc finger; it reads CETCGNIDTRSPCTIC. In terms of domain architecture, Toprim spans 83 to 178; it reads SIIVVVADVA…KVTRLAHGVP (96 aa).

It belongs to the RecR family.

Its function is as follows. May play a role in DNA repair. It seems to be involved in an RecBC-independent recombinational process of DNA repair. It may act with RecF and RecO. This Nitrobacter winogradskyi (strain ATCC 25391 / DSM 10237 / CIP 104748 / NCIMB 11846 / Nb-255) protein is Recombination protein RecR.